The sequence spans 414 residues: xyloglucan O-acetyltransferase 2 (414 aa).

At methionine 1 to arginine 26 the chain is on the cytoplasmic side. Residues phenylalanine 27 to tyrosine 47 traverse the membrane as a helical; Signal-anchor for type II membrane protein segment. Residues glutamine 48 to arginine 414 lie on the Lumenal side of the membrane. 4 cysteine pairs are disulfide-bonded: cysteine 70-cysteine 120, cysteine 91-cysteine 156, cysteine 100-cysteine 394, and cysteine 317-cysteine 390. Residue asparagine 88 is glycosylated (N-linked (GlcNAc...) asparagine). A GDS motif motif is present at residues glycine 143–serine 145. The active-site Nucleophile is serine 145. Asparagine 205, asparagine 263, and asparagine 308 each carry an N-linked (GlcNAc...) asparagine glycan. The Proton donor role is filled by aspartate 389. Residues aspartate 389–histidine 392 carry the DXXH motif motif. The Proton acceptor role is filled by histidine 392.

This sequence belongs to the PC-esterase family. TBL subfamily.

The protein localises to the membrane. In terms of biological role, xyloglucan acetyltransferase that catalyzes the acetylation of fucosylated Gal residues on xyloglucan side chains. Predominantly catalyze 6-O-monoacetylation of Gal residues in the Fuc-Gal-Xyl trisaccharide side chains of xyloglucan oligomers. Involved in xyloglucan specific O-acetylation in seeds. In Arabidopsis thaliana (Mouse-ear cress), this protein is xyloglucan O-acetyltransferase 2.